A 117-amino-acid chain; its full sequence is Large ribosomal subunit protein bL17 (117 aa).

The protein belongs to the bacterial ribosomal protein bL17 family. As to quaternary structure, part of the 50S ribosomal subunit. Contacts protein L32.

The polypeptide is Large ribosomal subunit protein bL17 (Campylobacter jejuni subsp. jejuni serotype O:6 (strain 81116 / NCTC 11828)).